Here is a 395-residue protein sequence, read N- to C-terminus: Probable hercynylcysteine sulfoxide lyase (395 aa).

A disordered region spans residues 1–21; that stretch reads MQDEAMRRSGANSPAGDSLAD. Lys-220 carries the post-translational modification N6-(pyridoxal phosphate)lysine.

This sequence belongs to the class-V pyridoxal-phosphate-dependent aminotransferase family. EgtE subfamily. Pyridoxal 5'-phosphate is required as a cofactor.

It carries out the reaction S-(hercyn-2-yl)-L-cysteine S-oxide + AH2 + H(+) = ergothioneine + pyruvate + A + NH4(+). It participates in amino-acid biosynthesis; ergothioneine biosynthesis. In terms of biological role, probably catalyzes the conversion of hercynylcysteine sulfoxide to ergothioneine. ERG is one of the major redox buffers which protects bacteria against redox stressors and antibiotics; loss of ERG or mycothiol (MSH, the other major redox buffer in this bacteria) leads to respiratory alterations and bioenergetic deficiencies that negatively impact virulence. This chain is Probable hercynylcysteine sulfoxide lyase, found in Mycobacterium tuberculosis (strain CDC 1551 / Oshkosh).